The sequence spans 181 residues: Ribonuclease HII (181 aa).

Residues M1–I181 form the RNase H type-2 domain. Residues D6, E7, and D98 each contribute to the a divalent metal cation site.

It belongs to the RNase HII family. It depends on Mn(2+) as a cofactor. Requires Mg(2+) as cofactor.

It localises to the cytoplasm. It catalyses the reaction Endonucleolytic cleavage to 5'-phosphomonoester.. Functionally, endonuclease that specifically degrades the RNA of RNA-DNA hybrids. This is Ribonuclease HII from Borrelia duttonii (strain Ly).